A 392-amino-acid chain; its full sequence is Imidazolonepropionase (392 aa).

Positions 69 and 71 each coordinate Fe(3+). H69 and H71 together coordinate Zn(2+). Positions 78, 136, and 163 each coordinate 4-imidazolone-5-propanoate. Residue Y136 coordinates N-formimidoyl-L-glutamate. H226 is a Fe(3+) binding site. H226 contacts Zn(2+). Q229 contacts 4-imidazolone-5-propanoate. Residue D302 participates in Fe(3+) binding. Residue D302 coordinates Zn(2+). N304 and G306 together coordinate N-formimidoyl-L-glutamate. Position 307 (S307) interacts with 4-imidazolone-5-propanoate.

This sequence belongs to the metallo-dependent hydrolases superfamily. HutI family. It depends on Zn(2+) as a cofactor. Requires Fe(3+) as cofactor.

It is found in the cytoplasm. It catalyses the reaction 4-imidazolone-5-propanoate + H2O = N-formimidoyl-L-glutamate. It functions in the pathway amino-acid degradation; L-histidine degradation into L-glutamate; N-formimidoyl-L-glutamate from L-histidine: step 3/3. Its function is as follows. Catalyzes the hydrolytic cleavage of the carbon-nitrogen bond in imidazolone-5-propanoate to yield N-formimidoyl-L-glutamate. It is the third step in the universal histidine degradation pathway. This Salinispora arenicola (strain CNS-205) protein is Imidazolonepropionase.